The chain runs to 1161 residues: DNA-directed RNA polymerase subunit beta (1161 aa).

It belongs to the RNA polymerase beta chain family. As to quaternary structure, the RNAP catalytic core consists of 2 alpha, 1 beta, 1 beta' and 1 omega subunit. When a sigma factor is associated with the core the holoenzyme is formed, which can initiate transcription. The RNAP complex including the principal sigma factor HrdB also interacts with RNA-binding protein RbpA.

The enzyme catalyses RNA(n) + a ribonucleoside 5'-triphosphate = RNA(n+1) + diphosphate. DNA-dependent RNA polymerase catalyzes the transcription of DNA into RNA using the four ribonucleoside triphosphates as substrates. The protein is DNA-directed RNA polymerase subunit beta of Streptomyces coelicolor (strain ATCC BAA-471 / A3(2) / M145).